Here is a 133-residue protein sequence, read N- to C-terminus: MAKEFGRPQRVAQEMQKEIAIILQREIKDPRLGMMTTVSGVEMSRDLAYAKVYVTFLNDKDEAAVKAGIKALQEASGFIRSLLGKAMRLRIVPELTFFYDNSLVEGMRMSNLVTSVVKHDDERRVNPDDSKED.

It belongs to the RbfA family. Monomer. Binds 30S ribosomal subunits, but not 50S ribosomal subunits or 70S ribosomes.

It is found in the cytoplasm. Its function is as follows. One of several proteins that assist in the late maturation steps of the functional core of the 30S ribosomal subunit. Associates with free 30S ribosomal subunits (but not with 30S subunits that are part of 70S ribosomes or polysomes). Required for efficient processing of 16S rRNA. May interact with the 5'-terminal helix region of 16S rRNA. The protein is Ribosome-binding factor A of Klebsiella pneumoniae (strain 342).